Reading from the N-terminus, the 502-residue chain is uncharacterized protein (502 aa).

Low complexity-rich tracts occupy residues 1-10 (MQSTTNNNTN), 28-47 (SNRS…NNLS), and 155-171 (NTED…SVNS). Disordered regions lie at residues 1–57 (MQST…VISY), 155–181 (NTED…LSAR), 212–362 (SLGN…TDKF), and 438–487 (TIDQ…TSNL). The segment covering 212–230 (SLGNSERNSPDRPSTQGDS) has biased composition (polar residues). Low complexity-rich tracts occupy residues 242 to 290 (RNAS…SSRN) and 309 to 327 (SNKN…TSIK). Over residues 339-348 (QTNKSKNQRG) the composition is skewed to polar residues. Residues 446–460 (TSDKNNSTKSNTKYN) show a composition bias toward low complexity. A compositionally biased stretch (polar residues) spans 470-487 (SYGTSKRSHNRSSNTSNL).

It localises to the virion. This is an uncharacterized protein from Acanthamoeba polyphaga (Amoeba).